Here is a 508-residue protein sequence, read N- to C-terminus: Lysine-specific permease LysP (508 aa).

Transmembrane regions (helical) follow at residues Ser-43–Ile-63, Ala-66–Met-86, Pro-112–Val-132, Trp-144–Ile-164, Ile-184–Gly-204, Phe-219–Ala-239, Ile-270–Pro-290, Val-314–Ala-334, Ile-367–Ile-387, Phe-393–Ile-413, Ala-436–Gly-456, and Trp-467–Tyr-487.

Belongs to the amino acid-polyamine-organocation (APC) superfamily. Amino acid transporter (AAT) (TC 2.A.3.1) family.

Its subcellular location is the cell membrane. The enzyme catalyses L-lysine(out) + H(+)(out) = L-lysine(in) + H(+)(in). Its function is as follows. Permease involved in lysine uptake. In Lactococcus lactis subsp. cremoris (strain MG1363), this protein is Lysine-specific permease LysP.